Here is an 880-residue protein sequence, read N- to C-terminus: Potassium/sodium hyperpolarization-activated cyclic nucleotide-gated channel 1 (880 aa).

The disordered stretch occupies residues 1–80 (MEGGGKPNSS…SAGGLEDAEG (80 aa)). The Cytoplasmic segment spans residues 1–136 (MEGGGKPNSS…WIIHSYSDFR (136 aa)). The span at 8-34 (NSSSNSRDDGNSVFPAKAPATGAGPAA) shows a compositional bias: low complexity. A compositionally biased stretch (gly residues) spans 62-71 (DGGGGGGEES). The chain crosses the membrane as a helical span at residues 137–158 (FYWDLIMLIMMVGNLVIIPVGI). The Extracellular portion of the chain corresponds to 159–167 (TFFTEQTTT). The helical transmembrane segment at 168–188 (PWIIFNVASDTVFLLDLIMNF) threads the bilayer. The Cytoplasmic portion of the chain corresponds to 189 to 209 (RTGTVNEDSSEIILDPKVIKM). A helical transmembrane segment spans residues 210–230 (NYLKSWFVVDFISSIPVDYIF). The Extracellular portion of the chain corresponds to 231 to 254 (LIVEKGMDSEVYKTARALRIVRFT). A helical; Voltage-sensor membrane pass occupies residues 255–275 (KILSLLRLLRLSRLIRYIHQW). Over 276–289 (EEIFHMTYDLASAV) the chain is Cytoplasmic. Residues 290–312 (VRIFNLIGMMLLLCHWDGCLQFL) form a helical membrane-spanning segment. Over 313–338 (VPLLQDFPPDCWVSLNEMVNDSWGKQ) the chain is Extracellular. N-linked (GlcNAc...) asparagine glycosylation occurs at Asn-332. Positions 339–360 (YSYALFKAMSHMLCIGYGAQAP) form an intramembrane region, pore-forming. The Selectivity filter motif lies at 352–356 (CIGYG). The Extracellular portion of the chain corresponds to 361–365 (VSMSD). Residues 366 to 386 (LWITMLSMIVGATCYAMFVGH) traverse the membrane as a helical segment. Topologically, residues 387–880 (ATALIQSLDS…AEKPRFASNL (494 aa)) are cytoplasmic. 3',5'-cyclic AMP contacts are provided by Gly-533, Glu-534, Cys-536, Arg-543, Thr-544, Arg-584, and Arg-587. Residues 641-664 (LNSTSSTATPTSRMRTQSPPVYTA) show a composition bias toward polar residues. Disordered stretches follow at residues 641 to 686 (LNST…QPSA), 718 to 786 (ASQL…LPHE), and 835 to 880 (MSSG…ASNL). Composition is skewed to low complexity over residues 665 to 685 (TSLS…PQPS) and 725 to 738 (PQQQ…QTQP). Over residues 760–770 (STQALPNTSLT) the composition is skewed to polar residues. Residues 844–855 (RGVPPAPPPPAA) are compositionally biased toward pro residues. Positions 870–880 (EAEKPRFASNL) are enriched in basic and acidic residues.

It belongs to the potassium channel HCN family. In terms of assembly, homotetramer. Heterotetramer with HCN2. The potassium channel is composed of a homo- or heterotetrameric complex of pore-forming subunits. Interacts with KCNE2. Interacts with the SH3 domain of CSK. In terms of tissue distribution, detected in myocytes in heart sinoatrial node (SAN) and in brain, in particular in the granule cell layer and in Purkinje neuron bodies in the cerebellum.

The protein localises to the cell membrane. It catalyses the reaction Na(+)(in) = Na(+)(out). The catalysed reaction is K(+)(in) = K(+)(out). With respect to regulation, activated by cAMP. cAMP binding promotes tetramerization and formation of an active channel. Compared to other family members, cAMP has less stimulatory effect on HCN1 because part of the molecules already contain bound cAMP and form homotetramers when cAMP levels are low, this inherent tetramerization in HCN1 results in a weaker response to increased cAMP. Functionally, hyperpolarization-activated ion channel that are permeable to sodium and potassium ions. Exhibits weak selectivity for potassium over sodium ions. Contributes to the native pacemaker currents in heart (If) and in neurons (Ih). Participates in cerebellar mechanisms of motor learning. May mediate responses to sour stimuli. The sequence is that of Potassium/sodium hyperpolarization-activated cyclic nucleotide-gated channel 1 (HCN1) from Oryctolagus cuniculus (Rabbit).